The primary structure comprises 123 residues: Seripauperin-16 (123 aa).

A signal peptide spans 1–20 (MVKLTSIAAGVAAIAAGVAA).

It belongs to the SRP1/TIP1 family. Seripauperin subfamily.

This Saccharomyces cerevisiae (strain ATCC 204508 / S288c) (Baker's yeast) protein is Seripauperin-16 (PAU16).